The following is a 165-amino-acid chain: Nucleotide-binding protein Syncc9902_1708 (165 aa).

This sequence belongs to the YajQ family.

Functionally, nucleotide-binding protein. The polypeptide is Nucleotide-binding protein Syncc9902_1708 (Synechococcus sp. (strain CC9902)).